We begin with the raw amino-acid sequence, 218 residues long: Small ribosomal subunit protein uS3c (218 aa).

The 72-residue stretch at 47-118 (VQKNIRISSG…KLNIAITRIS (72 aa)) folds into the KH type-2 domain.

The protein belongs to the universal ribosomal protein uS3 family. Part of the 30S ribosomal subunit.

It localises to the plastid. The protein localises to the chloroplast. The polypeptide is Small ribosomal subunit protein uS3c (rps3) (Barbarea verna (Land cress)).